The chain runs to 352 residues: Photosystem II D2 protein (352 aa).

Threonine 2 bears the N-acetylthreonine mark. Threonine 2 carries the post-translational modification Phosphothreonine. The chain crosses the membrane as a helical span at residues 40–60 (CAYFALGGWLTGTTFVSSWYT). Histidine 117 serves as a coordination point for chlorophyll a. The chain crosses the membrane as a helical span at residues 124–140 (GFMLRQFEIARAVQIRP). Glutamine 129 and asparagine 142 together coordinate pheophytin a. A helical membrane pass occupies residues 152–165 (VFVSVFLIYPLGQS). Residue histidine 197 coordinates chlorophyll a. Residues 207 to 227 (AALLCAIHGATVENTLFEDGD) traverse the membrane as a helical segment. 2 residues coordinate a plastoquinone: histidine 214 and phenylalanine 261. Histidine 214 provides a ligand contact to Fe cation. Histidine 268 serves as a coordination point for Fe cation. A helical transmembrane segment spans residues 278–294 (GLWMSALGVVGLALNLR).

It belongs to the reaction center PufL/M/PsbA/D family. In terms of assembly, PSII is composed of 1 copy each of membrane proteins PsbA, PsbB, PsbC, PsbD, PsbE, PsbF, PsbH, PsbI, PsbJ, PsbK, PsbL, PsbM, PsbT, PsbX, PsbY, PsbZ, Psb30/Ycf12, at least 3 peripheral proteins of the oxygen-evolving complex and a large number of cofactors. It forms dimeric complexes. The cofactor is The D1/D2 heterodimer binds P680, chlorophylls that are the primary electron donor of PSII, and subsequent electron acceptors. It shares a non-heme iron and each subunit binds pheophytin, quinone, additional chlorophylls, carotenoids and lipids. There is also a Cl(-1) ion associated with D1 and D2, which is required for oxygen evolution. The PSII complex binds additional chlorophylls, carotenoids and specific lipids..

The protein resides in the plastid. The protein localises to the chloroplast thylakoid membrane. The catalysed reaction is 2 a plastoquinone + 4 hnu + 2 H2O = 2 a plastoquinol + O2. Functionally, photosystem II (PSII) is a light-driven water:plastoquinone oxidoreductase that uses light energy to abstract electrons from H(2)O, generating O(2) and a proton gradient subsequently used for ATP formation. It consists of a core antenna complex that captures photons, and an electron transfer chain that converts photonic excitation into a charge separation. The D1/D2 (PsbA/PsbD) reaction center heterodimer binds P680, the primary electron donor of PSII as well as several subsequent electron acceptors. D2 is needed for assembly of a stable PSII complex. The protein is Photosystem II D2 protein of Ostreococcus tauri.